The following is a 372-amino-acid chain: Cobalt-precorrin-5B C(1)-methyltransferase (372 aa).

Belongs to the CbiD family.

The catalysed reaction is Co-precorrin-5B + S-adenosyl-L-methionine = Co-precorrin-6A + S-adenosyl-L-homocysteine. It participates in cofactor biosynthesis; adenosylcobalamin biosynthesis; cob(II)yrinate a,c-diamide from sirohydrochlorin (anaerobic route): step 6/10. Catalyzes the methylation of C-1 in cobalt-precorrin-5B to form cobalt-precorrin-6A. The polypeptide is Cobalt-precorrin-5B C(1)-methyltransferase (Prochlorococcus marinus (strain MIT 9515)).